A 444-amino-acid polypeptide reads, in one-letter code: Cadaverine/lysine antiporter (444 aa).

A run of 12 helical transmembrane segments spans residues 7 to 27 (IGLF…GIAL), 35 to 55 (IGGI…SLAY), 95 to 115 (IGNL…FPVL), 123 to 143 (IACI…GTWV), 149 to 169 (IGLV…WHWF), 193 to 213 (ILLC…TGMV), 222 to 242 (LATM…TQVL), 273 to 293 (LVSA…MMLV), 323 to 343 (LLLA…MNSA), 354 to 374 (LTGI…VDLI), 384 to 404 (FVSL…LMGA), and 405 to 425 (SSFE…FYAR).

This sequence belongs to the amino acid-polyamine-organocation (APC) superfamily. Basic amino acid/polyamine antiporter (APA) (TC 2.A.3.2) family.

The protein resides in the cell inner membrane. The catalysed reaction is cadaverine(in) + L-lysine(out) = cadaverine(out) + L-lysine(in). Its function is as follows. Under acidic conditions, in the presence of lysine, functions as a cadaverine:lysine antiporter that facilitates the excretion of cadaverine and the uptake of lysine. The sequence is that of Cadaverine/lysine antiporter (cadB) from Escherichia coli O157:H7.